Consider the following 242-residue polypeptide: Ribosomal RNA small subunit methyltransferase G (242 aa).

Residues Gly79, Phe84, 130 to 131 (AE), and Arg150 each bind S-adenosyl-L-methionine.

The protein belongs to the methyltransferase superfamily. RNA methyltransferase RsmG family.

It localises to the cytoplasm. Its function is as follows. Specifically methylates the N7 position of a guanine in 16S rRNA. In Levilactobacillus brevis (strain ATCC 367 / BCRC 12310 / CIP 105137 / JCM 1170 / LMG 11437 / NCIMB 947 / NCTC 947) (Lactobacillus brevis), this protein is Ribosomal RNA small subunit methyltransferase G.